A 329-amino-acid polypeptide reads, in one-letter code: Prostaglandin reductase 1 (329 aa).

At Thr-18 the chain carries Phosphothreonine. Residue Ser-20 is modified to Phosphoserine. NADP(+)-binding positions include 152-155, Lys-178, Tyr-193, Asn-217, 239-245, 270-272, and Asn-321; these read GAVG, CGAISTY, and FIV. N6-(2-hydroxyisobutyryl)lysine; alternate is present on Lys-178. N6-acetyllysine; alternate is present on Lys-178.

The protein belongs to the NADP-dependent oxidoreductase L4BD family. As to quaternary structure, monomer or homodimer. As to expression, ubiquitously distributed in various tissues and leukocytes, the kidney and liver had the highest enzyme activities.

The protein localises to the cytoplasm. The catalysed reaction is 13,14-dihydro-15-oxo-prostaglandin E1 + NADP(+) = 15-oxoprostaglandin E1 + NADPH + H(+). It carries out the reaction 13,14-dihydro-15-oxo-prostaglandin E2 + NADP(+) = 15-oxoprostaglandin E2 + NADPH + H(+). It catalyses the reaction 13,14-dihydro-15-oxo-prostaglandin E2 + NAD(+) = 15-oxoprostaglandin E2 + NADH + H(+). The enzyme catalyses 13,14-dihydro-15-oxo-prostaglandin F1alpha + NADP(+) = 15-oxoprostaglandin F1alpha + NADPH + H(+). The catalysed reaction is 13,14-dihydro-15-oxo-PGF2alpha + NADP(+) = 15-oxoprostaglandin F2alpha + NADPH + H(+). It carries out the reaction leukotriene B4 + NADP(+) = 12-oxo-leukotriene B4 + NADPH + H(+). It catalyses the reaction 20-hydroxy-leukotriene B4 + NADP(+) = 12-oxo-20-hydroxy-leukotriene B4 + NADPH + H(+). The enzyme catalyses 6-trans-leukotriene B4 + NADP(+) = 12-oxo-(5S)-hydroxy-(6E,8E,10E,14Z)-eicosatetraenoate + NADPH + H(+). The catalysed reaction is (5S,12S)-dihydroxy-(6E,10E,12E,14Z)-eicosatetraenoate + NADP(+) = 12-oxo-(5S)-hydroxy-(6E,8E,10E,14Z)-eicosatetraenoate + NADPH + H(+). It carries out the reaction 15-oxo-(5S,6R)-dihydroxy-(7E,9E,11Z,13E)-eicosatetraenoate + NADH + H(+) = 15-oxo-(5S,6R)-dihydroxy-(7E,9E,11Z)-eicosatrienoate + NAD(+). It catalyses the reaction an n-alkanal + NADP(+) = an alk-2-enal + NADPH + H(+). The enzyme catalyses hexanal + NADP(+) = (E)-hex-2-enal + NADPH + H(+). The catalysed reaction is octanal + NADP(+) = (2E)-octenal + NADPH + H(+). It carries out the reaction decanal + NADP(+) = (2E)-decenal + NADPH + H(+). It catalyses the reaction dodecanal + NADP(+) = (2E)-dodecenal + NADPH + H(+). The enzyme catalyses 4-hydroxynonanal + NADP(+) = (E)-4-hydroxynon-2-enal + NADPH + H(+). The catalysed reaction is pentan-2-one + NADP(+) = (E)-pent-3-en-2-one + NADPH + H(+). It carries out the reaction nonan-2-one + NADP(+) = (3E)-nonen-2-one + NADPH + H(+). With respect to regulation, down-regulated by nonsteroidal anti-inflammatory drugs diclofenac, indomethacin and niflumic acid. NAD(P)H-dependent oxidoreductase involved in metabolic inactivation of pro- and anti-inflammatory eicosanoids: prostaglandins (PG), leukotrienes (LT) and lipoxins (LX). Preferentially uses NADPH over NADH as cofactor. Catalyzes with high efficiency the reduction of the 13,14 double bond of 15-oxoPGs, including 15-oxo-PGE1, 15-oxo-PGE2, 15-oxo-PGF1-alpha and 15-oxo-PGF2-alpha. Catalyzes with lower efficiency the oxidation of the hydroxyl group at C12 of LTB4 and its derivatives, converting them into biologically less active 12-oxo-LTB4 metabolites. Reduces 15-oxo-LXA4 to 13,14 dihydro-15-oxo-LXA4 and may promote neutrophil recruitment at the inflammatory site. Plays a role in metabolic detoxification of alkenals and ketones. Reduces alpha,beta-unsaturated alkenals and ketones, particularly those with medium-chain length, showing highest affinity toward (2E)-decenal and (3E)-3-nonen-2-one. May inactivate 4-hydroxy-2-nonenal, a cytotoxic lipid constituent of oxidized low-density lipoprotein particles. The sequence is that of Prostaglandin reductase 1 (PTGR1) from Sus scrofa (Pig).